Here is a 294-residue protein sequence, read N- to C-terminus: Small ribosomal subunit protein uS2 (294 aa).

Positions 254-294 are disordered; it reads ESSNTEAPVAETAAAEAPVADAAIEAPVAEEAKTTEADDTK. A compositionally biased stretch (low complexity) spans 259-282; it reads EAPVAETAAAEAPVADAAIEAPVA. Residues 283 to 294 show a composition bias toward basic and acidic residues; that stretch reads EEAKTTEADDTK.

This sequence belongs to the universal ribosomal protein uS2 family.

The polypeptide is Small ribosomal subunit protein uS2 (Renibacterium salmoninarum (strain ATCC 33209 / DSM 20767 / JCM 11484 / NBRC 15589 / NCIMB 2235)).